Here is a 128-residue protein sequence, read N- to C-terminus: uncharacterized protein (128 aa).

A VOC domain is found at lysine 2–methionine 127. Positions 48 and 123 each coordinate Ni(2+).

The protein belongs to the glyoxalase I family.

This is an uncharacterized protein from Bacillus subtilis (strain 168).